The chain runs to 465 residues: Serine/threonine-protein kinase AtPK1/AtPK6 (465 aa).

The LVxCxE motif signature appears at 91 to 96 (LVECLE). In terms of domain architecture, Protein kinase spans 134-389 (FEVMKVVGKG…AEEIKQHKWF (256 aa)). ATP-binding positions include 140-148 (VGKGAFGKV) and lysine 163. Aspartate 257 acts as the Proton acceptor in catalysis. The activation loop stretch occupies residues 275-301 (DFGLAKEFEENTRSNSMCGTTEYMAPE). Serine 290 carries the phosphoserine; by PDPK1 modification. Positions 390–460 (KGINWKKLEA…VRPPPSFLHQ (71 aa)) constitute an AGC-kinase C-terminal domain. Threonine 449 is modified (phosphothreonine; by TOR).

It belongs to the protein kinase superfamily. AGC Ser/Thr protein kinase family. S6 kinase subfamily. In terms of assembly, interacts with RAPTOR1. Interacts with RBR1-E2FB complex through its LVxCxE motif. Interacts with TAP46. Binds to MRF1. Post-translationally, undergoes serine-specific autophosphorylation. Phosphorylated at Thr-449 by TOR. As to expression, expressed in all tissues.

Its subcellular location is the cytoplasm. The protein resides in the nucleus. The enzyme catalyses L-seryl-[protein] + ATP = O-phospho-L-seryl-[protein] + ADP + H(+). It catalyses the reaction L-threonyl-[protein] + ATP = O-phospho-L-threonyl-[protein] + ADP + H(+). Its activity is regulated as follows. Activated by PDK1. Repressed during osmotic stress. Downstream effector of TOR signaling pathway involved in osmotic stress response. Could be involved in the control of plant growth and development. Phosphorylates the ribosomal proteins P14, P16 and S6. Functions as a repressor of cell proliferation and required for maintenance of chromosome stability and ploidy levels through the RBR1-E2F pathway. Mediates the phosphorylation of MRFs (e.g. MRF1). The chain is Serine/threonine-protein kinase AtPK1/AtPK6 from Arabidopsis thaliana (Mouse-ear cress).